Reading from the N-terminus, the 449-residue chain is Exodeoxyribonuclease 7 large subunit (449 aa).

This sequence belongs to the XseA family. Heterooligomer composed of large and small subunits.

It is found in the cytoplasm. The catalysed reaction is Exonucleolytic cleavage in either 5'- to 3'- or 3'- to 5'-direction to yield nucleoside 5'-phosphates.. Its function is as follows. Bidirectionally degrades single-stranded DNA into large acid-insoluble oligonucleotides, which are then degraded further into small acid-soluble oligonucleotides. The polypeptide is Exodeoxyribonuclease 7 large subunit (Lacticaseibacillus casei (strain BL23) (Lactobacillus casei)).